A 65-amino-acid polypeptide reads, in one-letter code: Large ribosomal subunit protein uL29 (65 aa).

It belongs to the universal ribosomal protein uL29 family.

The polypeptide is Large ribosomal subunit protein uL29 (Methylococcus capsulatus (strain ATCC 33009 / NCIMB 11132 / Bath)).